The primary structure comprises 732 residues: Acylamino-acid-releasing enzyme (732 aa).

Position 1 is an N-acetylmethionine (Met1). 2 positions are modified to phosphoserine: Ser185 and Ser187. Active-site charge relay system residues include Ser587, Asp675, and His707.

As to quaternary structure, homotetramer. In terms of tissue distribution, expressed in erythrocytes (at protein level).

The protein localises to the cytoplasm. The catalysed reaction is Cleavage of an N-acetyl or N-formyl amino acid from the N-terminus of a polypeptide.. Homotetramerization is required for activity. Tetramerization results in the formation of a gated channel which is involved in substrate selection and substrate access to the catalytic sites. Functionally, this enzyme catalyzes the hydrolysis of the N-terminal peptide bond of an N-acetylated peptide to generate an N-acetylated amino acid and a peptide with a free N-terminus. It preferentially cleaves off Ac-Ala, Ac-Met and Ac-Ser. Also, involved in the degradation of oxidized and glycated proteins. In Homo sapiens (Human), this protein is Acylamino-acid-releasing enzyme (APEH).